Reading from the N-terminus, the 499-residue chain is Trichoplein keratin filament-binding protein (499 aa).

Coiled-coil stretches lie at residues 17-143 (LEQQ…LYEQ), 169-304 (EQIT…LSAL), and 405-485 (NRER…TQRG). The interval 260-426 (RKMEQCRKKT…RQFTSREKKQ (167 aa)) is trichohyalin/plectin homology domain.

It belongs to the TCHP family.

It localises to the cytoplasm. The protein resides in the cytoskeleton. Its subcellular location is the microtubule organizing center. The protein localises to the centrosome. In terms of biological role, may act as a 'capping' or 'branching' protein for keratin filaments in the cell periphery. May regulate K8/K18 filament and desmosome organization mainly at the apical or peripheral regions of simple epithelial cells. This chain is Trichoplein keratin filament-binding protein, found in Xenopus laevis (African clawed frog).